Consider the following 98-residue polypeptide: MIHDYHWRRGKRRKLIVMMETRMMIIMMTIKPPHDIYREQQNHHDDETKRSTKHCVTATHPWPRPAASCFRCPLRGGHHRRRPACALPHGWSVMNSCS.

This is an uncharacterized protein from Human cytomegalovirus (strain AD169) (HHV-5).